Here is a 689-residue protein sequence, read N- to C-terminus: Methionine--tRNA ligase (689 aa).

The 'HIGH' region motif lies at 15 to 25 (PYANGPIHLGH). Zn(2+)-binding residues include cysteine 146, cysteine 149, cysteine 159, and cysteine 162. A 'KMSKS' region motif is present at residues 332 to 336 (KMSKS). Lysine 335 contacts ATP. One can recognise a tRNA-binding domain in the interval 588 to 689 (DFAKIDLRIA…EGAQPGMRVK (102 aa)).

Belongs to the class-I aminoacyl-tRNA synthetase family. MetG type 1 subfamily. Homodimer. The cofactor is Zn(2+).

The protein localises to the cytoplasm. It carries out the reaction tRNA(Met) + L-methionine + ATP = L-methionyl-tRNA(Met) + AMP + diphosphate. Its function is as follows. Is required not only for elongation of protein synthesis but also for the initiation of all mRNA translation through initiator tRNA(fMet) aminoacylation. The chain is Methionine--tRNA ligase from Shewanella baltica (strain OS223).